A 718-amino-acid polypeptide reads, in one-letter code: MASSAAQIHVLGGIGFASSSSSKRNLNGKGGTFMPRSAFFGTRTGPFSTPTSAFLRMGTRNGGGASRYAVGPVRVVNEKVVGIDLGTTNSAVAAMEGGKPTIVTNAEGQRTTPSVVAYTKSGDRLVGQIAKRQAVVNPENTFFSVKRFIGRKMNEVDEESKQVSYRVVRDENNNVKLECPAINKQFAAEEISAQVLRKLVDDASRFLNDKVTKAVITVPAYFNDSQRTATKDAGRIAGLEVLRIINEPTAASLAYGFDRKANETILVFDLGGGTFDVSVLEVGDGVFEVLSTSGDTHLGGDDFDKRVVDWLAAEFKKDEGIDLLKDKQALQRLTEAAEKAKIELSSLTQTNMSLPFITATADGPKHIETTLTRAKFEELCSDLLDRVRTPVENSLRDAKLSFKDIDEVILVGGSTRIPAVQELVRKVTGKEPNVTVNPDEVVALGAAVQAGVLAGDVSDIVLLDVTPLSIGLETLGGVMTKIIPRNTTLPTSKSEVFSTAADGQTSVEINVLQGEREFVRDNKSLGSFRLDGIPPAPRGVPQIEVKFDIDANGILSVSAVDKGTGKKQDITITGASTLPKDEVDQMVQEAERFAKDDKEKRDAIDTKNQADSVVYQTEKQLKELGEKIPGEVKEKVEAKLQELKDKIGSGSTQEIKDAMAALNQEVMQIGQSLYNQPGAGGPGAGPSPGGEGASSGDSSSSKGGDGDDVIDADFTDSQ.

The N-terminal 92 residues, 1 to 92, are a transit peptide targeting the chloroplast; it reads MASSAAQIHV…IDLGTTNSAV (92 aa). The segment at 671-718 is disordered; it reads QSLYNQPGAGGPGAGPSPGGEGASSGDSSSSKGGDGDDVIDADFTDSQ. Positions 678–693 are enriched in gly residues; the sequence is GAGGPGAGPSPGGEGA. Positions 706–718 are enriched in acidic residues; it reads GDDVIDADFTDSQ.

Belongs to the heat shock protein 70 (TC 1.A.33) family. DnaK subfamily. In terms of assembly, interacts with geminivirus movement protein (MP).

Its subcellular location is the plastid. The protein resides in the chloroplast stroma. In terms of biological role, acts redundantly with HSP70-7 in the thermotolerance of germinating seeds. Plays an important role in the protein precursor import into chloroplasts. Its function is as follows. In cooperation with other chaperones, Hsp70s are key components that facilitate folding of de novo synthesized proteins, assist translocation of precursor proteins into organelles, and are responsible for degradation of damaged protein under stress conditions. This Arabidopsis thaliana (Mouse-ear cress) protein is Heat shock 70 kDa protein 6, chloroplastic (HSP70-6).